The sequence spans 628 residues: ATP-dependent zinc metalloprotease FtsH (628 aa).

The Stromal portion of the chain corresponds to 1–7; the sequence is MKLSWKT. The helical transmembrane segment at 8–28 threads the bilayer; that stretch reads LLLWSLPIFVVGFFFWQGFLG. Over 29 to 118 the chain is Lumenal; that stretch reads PTTTDVGSNI…AHPPKSTSAV (90 aa). Residues 119 to 139 form a helical membrane-spanning segment; that stretch reads WGLLGNLLFPLILVGGLAFLF. Over 140–628 the chain is Stromal; sequence RRSNNASGGP…PEKNYYISQF (489 aa). 213–220 contributes to the ATP binding site; sequence GPPGTGKT. Zn(2+) is bound at residue histidine 434. Glutamate 435 is a catalytic residue. Positions 438 and 512 each coordinate Zn(2+).

It in the central section; belongs to the AAA ATPase family. This sequence in the C-terminal section; belongs to the peptidase M41 family. Homohexamer. It depends on Zn(2+) as a cofactor.

The protein localises to the plastid. It localises to the chloroplast thylakoid membrane. Acts as a processive, ATP-dependent zinc metallopeptidase. The protein is ATP-dependent zinc metalloprotease FtsH of Porphyra purpurea (Red seaweed).